Reading from the N-terminus, the 123-residue chain is MSYAIIEAGGQQLKVEPGRFYDINYLGVDPDSDYTIDKVLLINHEDDITVGQPYVEGATVEGTIVEHRRGRKIIVYKMRPKKKTRKKRGHRQELSRLMITSIKVNGSVIVDDSAVMTETSEEE.

The protein belongs to the bacterial ribosomal protein bL21 family. As to quaternary structure, part of the 50S ribosomal subunit. Contacts protein L20.

Functionally, this protein binds to 23S rRNA in the presence of protein L20. The sequence is that of Large ribosomal subunit protein bL21 from Rippkaea orientalis (strain PCC 8801 / RF-1) (Cyanothece sp. (strain PCC 8801)).